Here is a 213-residue protein sequence, read N- to C-terminus: High frequency lysogenization protein HflD homolog (213 aa).

A coiled-coil region spans residues 79–126; sequence QGLNAELTRYTLSLMVLERKLSSAKGALDTLGNRINGLQRQLEHFDLQ.

The protein belongs to the HflD family.

The protein localises to the cytoplasm. It is found in the cell inner membrane. The chain is High frequency lysogenization protein HflD homolog from Shigella boydii serotype 18 (strain CDC 3083-94 / BS512).